The chain runs to 91 residues: DNA-binding protein HU (91 aa).

The protein belongs to the bacterial histone-like protein family.

Functionally, histone-like DNA-binding protein which is capable of wrapping DNA to stabilize it, and thus to prevent its denaturation under extreme environmental conditions. Also seems to act as a fortuitous virulence factor in delayed sequelae by binding to heparan sulfate-proteoglycans in the extracellular matrix of target organs and acting as a nidus for in situ immune complex formation. The sequence is that of DNA-binding protein HU (hup) from Streptococcus gordonii.